Here is a 421-residue protein sequence, read N- to C-terminus: Cytochrome c biogenesis protein Ccs1 (421 aa).

The next 3 helical transmembrane spans lie at 12-32, 71-91, and 157-177; these read LRFA…GTVI, TWWF…CTLL, and IAPI…IIGS.

Belongs to the Ccs1/CcsB family. In terms of assembly, may interact with CcsA.

Its subcellular location is the plastid. It localises to the chloroplast thylakoid membrane. Functionally, required during biogenesis of c-type cytochromes (cytochrome c6 and cytochrome f) at the step of heme attachment. This chain is Cytochrome c biogenesis protein Ccs1, found in Thalassiosira pseudonana (Marine diatom).